A 602-amino-acid chain; its full sequence is UPF0329 protein ECU02_0060 (602 aa).

The segment covering 313-345 (EEDERKRAEAESARNREELLRMEEREKGKEKGS) has biased composition (basic and acidic residues). A disordered region spans residues 313–407 (EEDERKRAEA…SPKEESKGEE (95 aa)). A compositionally biased stretch (basic residues) spans 346 to 356 (KGKGRKKRGKK). Over residues 357–369 (GAGEAKEESKEED) the composition is skewed to basic and acidic residues. Residues 370–384 (RGGEEEESVEADVPV) are compositionally biased toward acidic residues.

This sequence belongs to the UPF0329 family.

The polypeptide is UPF0329 protein ECU02_0060 (Encephalitozoon cuniculi (strain GB-M1) (Microsporidian parasite)).